Here is a 348-residue protein sequence, read N- to C-terminus: High mobility group protein 20A (348 aa).

Disordered regions lie at residues 1–114 (MENL…YVRF) and 181–213 (SRKA…DTKE). 2 stretches are compositionally biased toward polar residues: residues 34–47 (SESS…QPVN) and 56–71 (SQVQ…TAEN). The segment covering 72–82 (TEQKPEEEQQR) has biased composition (basic and acidic residues). Residues 83–97 (TKRGGWAKGRKRKKP) show a composition bias toward basic residues. A DNA-binding region (HMG box) is located at residues 104 to 172 (PKSPLTGYVR…RYMRELEQYQ (69 aa)). Positions 183–213 (KAQDRQKGKLHRQDGARQPVHDHEKEADTKE) are enriched in basic and acidic residues. Positions 230–274 (SKAREAELRQLRKSNMEFEERNAALQKHVESMRTAVEKLEVDVIQ) form a coiled coil.

It is found in the nucleus. In terms of biological role, plays a role in neuronal differentiation. This chain is High mobility group protein 20A (HMG20A), found in Gallus gallus (Chicken).